The primary structure comprises 489 residues: Cytochrome P450 71A26 (489 aa).

Residues 1–21 (MMIMFFLLCSIIFVVTIIIFR) form a helical membrane-spanning segment. Position 431 (cysteine 431) interacts with heme.

The protein belongs to the cytochrome P450 family. Requires heme as cofactor.

It localises to the membrane. The protein is Cytochrome P450 71A26 (CYP71A26) of Arabidopsis thaliana (Mouse-ear cress).